Here is a 266-residue protein sequence, read N- to C-terminus: Protein crossbronx-like (266 aa).

Residues 15 to 178 enclose the UBC core domain; sequence KQGYHILAEY…VQEQAILSRN (164 aa). Residues 234–266 are disordered; sequence SSRQLDEEEANQVEKLHRGRIPEHQREESEVSL. Over residues 245–266 the composition is skewed to basic and acidic residues; it reads QVEKLHRGRIPEHQREESEVSL.

Belongs to the ubiquitin-conjugating enzyme family. FTS subfamily.

The sequence is that of Protein crossbronx-like from Drosophila melanogaster (Fruit fly).